Here is a 421-residue protein sequence, read N- to C-terminus: MGKDYTFIRNWISFHFMGNINNFSYCVVNAASGNLSAYFHNSKNIGIILWANIAFGLVSRLVNTFLIENVNSKLKIVVNCLFMSIGLIGVALSVYVNFGFCIAAIAFVGIASSFGESVILSYMKKFPAELVNGWSSGTGIAGVCGSLFYIAMVAAGLSNSTIFYMMLPTVAVYFLLFFFGLKVPNHLEEDRTDNHNNSNNSSNNSKYTEKQSLVKKDQLIEDIDDGGGAEVAPPGETKKQRYIRCARLVWFNAVNLALVYFFEYVASVGGADLALKKDPNNDNFFIANAFAIFSFCYQLGVLISRSSLQFVKIKHIGVITILQGINMVFWIIQAKYKMVTSVWVLFILMVYCGLLGGASYVNVFYLILHQKNIPNEDRELCINYAALLVTVGITLAACFILVMDHTFLASEVPKTDSSSST.

A run of 5 helical transmembrane segments spans residues 13–35 (SFHF…SGNL), 47–67 (IILW…TFLI), 74–96 (LKIV…SVYV), 101–123 (CIAA…LSYM), and 137–157 (GTGI…AAGL). Asn-159 carries N-linked (GlcNAc...) asparagine glycosylation. A helical transmembrane segment spans residues 161 to 181 (TIFYMMLPTVAVYFLLFFFGL). The segment at 190–211 (DRTDNHNNSNNSSNNSKYTEKQ) is disordered. Residues 195–205 (HNNSNNSSNNS) show a composition bias toward low complexity. 4 N-linked (GlcNAc...) asparagine glycosylation sites follow: Asn-196, Asn-199, Asn-200, and Asn-203. 5 helical membrane-spanning segments follow: residues 248–268 (LVWF…VASV), 284–304 (FFIA…VLIS), 313–333 (IKHI…WIIQ), 338–358 (MVTS…LGGA), and 382–402 (INYA…FILV).

It belongs to the battenin family.

The protein resides in the lysosome membrane. In Dictyostelium discoideum (Social amoeba), this protein is Battenin (cln3).